Consider the following 115-residue polypeptide: Non-specific lipid-transfer protein 3 (115 aa).

The N-terminal stretch at 1–23 (MAFALRFFTCLVLTVCIVASVDA) is a signal peptide. 4 cysteine pairs are disulfide-bonded: Cys-27/Cys-74, Cys-37/Cys-51, Cys-52/Cys-97, and Cys-72/Cys-111.

It belongs to the plant LTP family.

In terms of biological role, plant non-specific lipid-transfer proteins transfer phospholipids as well as galactolipids across membranes. May play a role in wax or cutin deposition in the cell walls of expanding epidermal cells and certain secretory tissues. This is Non-specific lipid-transfer protein 3 (LTP3) from Arabidopsis thaliana (Mouse-ear cress).